A 113-amino-acid polypeptide reads, in one-letter code: U11-theraphotoxin-Hhn1a (113 aa).

A signal peptide spans M1–A21. Positions D22 to R74 are excised as a propeptide. Residues E61–D83 are disordered. 3 cysteine pairs are disulfide-bonded: C75/C90, C82/C95, and C89/C110.

This sequence belongs to the neurotoxin 14 (magi-1) family. 01 (HNTX-16) subfamily. Expressed by the venom gland.

It localises to the secreted. Its function is as follows. Probable ion channel inhibitor. This chain is U11-theraphotoxin-Hhn1a, found in Cyriopagopus hainanus (Chinese bird spider).